The following is a 47-amino-acid chain: Delta-actitoxin-Axm1e (47 aa).

Intrachain disulfides connect Cys4/Cys44, Cys6/Cys34, and Cys27/Cys45.

It belongs to the sea anemone sodium channel inhibitory toxin family. Type I subfamily.

It localises to the secreted. Its subcellular location is the nematocyst. Binds specifically to voltage-gated sodium channels (Nav), thereby delaying their inactivation. This toxin is active on a variety of voltage-gated sodium channels (Nav1.1/SCN1A, Nav1.2/SCN2A, Nav1.3/SCN3A, Nav1.4/SCN4A, Nav1.5/SCN5A and Nav1.6/SCN8A). This chain is Delta-actitoxin-Axm1e, found in Anthopleura xanthogrammica (Giant green sea anemone).